Here is a 1865-residue protein sequence, read N- to C-terminus: Transient receptor potential cation channel subfamily M member 7 (1865 aa).

The residue at position 1 (M1) is an N-acetylmethionine. Residues 1 to 850 lie on the Cytoplasmic side of the membrane; the sequence is MSQKSWIEST…ITRKFYAFYH (850 aa). At S101 the chain carries Phosphoserine. Residues 544–555 show a composition bias toward low complexity; the sequence is NRRSGRNTSSST. Positions 544 to 575 are disordered; that stretch reads NRRSGRNTSSSTPQLRKSHESFGNRADKKEKM. Residues 560–573 show a composition bias toward basic and acidic residues; the sequence is KSHESFGNRADKKE. A helical membrane pass occupies residues 851–876; the sequence is APIVKFWFNTLAYLGFLMLYTFVVLV. Over 877 to 882 the chain is Extracellular; that stretch reads QMEQLP. A helical transmembrane segment spans residues 883 to 904; that stretch reads SVQEWIVIAYIFTYAIEKVREI. Over 905–923 the chain is Cytoplasmic; it reads FMSEAGKVNQKIKVWFSDY. The helical transmembrane segment at 924-943 threads the bilayer; it reads FNISDTIAIISFFIGFGLRF. The Extracellular portion of the chain corresponds to 944–956; the sequence is GAKWNFANAYDNH. The helical transmembrane segment at 957–980 threads the bilayer; that stretch reads VFVAGRLIYCLNIIFWYVRLLDFL. At 981 to 999 the chain is on the cytoplasmic side; that stretch reads AVNQQAGPYVMMIGKMVAN. The helical transmembrane segment at 1000–1023 threads the bilayer; it reads MFYIVVIMALVLLSFGVPRKAILY. Over 1024 to 1025 the chain is Extracellular; that stretch reads PH. The pore-forming intramembrane region spans 1026-1066; it reads EAPSWTLAKDIVFHPYWMIFGEVYAYEIDVCANDSVIPQIC. Over 1067–1069 the chain is Extracellular; the sequence is GPG. Residues 1070 to 1098 traverse the membrane as a helical segment; sequence TWLTPFLQAVYLFVQYIIMVNLLIAFFNN. Residues 1099 to 1865 are Cytoplasmic-facing; that stretch reads VYLQVKAISN…ESTNSVRLML (767 aa). S-palmitoyl cysteine attachment occurs at residues C1143, C1144, and C1146. A Phosphothreonine; by autocatalysis modification is found at T1163. 2 positions are modified to phosphoserine; by autocatalysis: S1191 and S1193. The stretch at 1198-1250 forms a coiled coil; the sequence is RVTFERVEQMCIQIKEVGDRVNYIKRSLQSLDSQIGHLQDLSALTVDTLKTLT. S1224 carries the phosphoserine modification. 2 positions are modified to phosphoserine; by autocatalysis: S1255 and S1258. Position 1265 is a phosphothreonine; by autocatalysis (T1265). S1287 bears the Phosphoserine; by autocatalysis mark. Position 1301 is a phosphoserine (S1301). At S1358 the chain carries Phosphoserine; by autocatalysis. Phosphoserine is present on residues S1361 and S1386. The segment covering 1386-1398 has biased composition (low complexity); sequence SSSTSIPHLSSPP. The tract at residues 1386–1407 is disordered; sequence SSSTSIPHLSSPPTKFFVSTPS. A phosphoserine; by autocatalysis mark is found at S1387 and S1390. Phosphoserine occurs at positions 1395 and 1396. S1404 is modified (phosphoserine; by autocatalysis). T1405 carries the post-translational modification Phosphothreonine; by autocatalysis. S1407 is subject to Phosphoserine; by autocatalysis. Position 1435 is a phosphothreonine; by autocatalysis (T1435). S1446 is modified (phosphoserine; by autocatalysis). T1455 carries the post-translational modification Phosphothreonine; by autocatalysis. S1456 and S1463 each carry phosphoserine; by autocatalysis. The residue at position 1467 (T1467) is a Phosphothreonine. S1468 is modified (phosphoserine; by autocatalysis). Position 1471 is a phosphothreonine; by autocatalysis (T1471). 2 positions are modified to phosphoserine; by autocatalysis: S1476 and S1477. T1482 bears the Phosphothreonine; by autocatalysis mark. Residues 1492 to 1511 form a disordered region; it reads HSKQAEKISRRPSTEDTHEV. S1493 bears the Phosphoserine; by autocatalysis mark. A compositionally biased stretch (basic and acidic residues) spans 1494-1511; the sequence is KQAEKISRRPSTEDTHEV. At S1500 the chain carries Phosphoserine. S1504 is subject to Phosphoserine; by autocatalysis. T1508 carries the post-translational modification Phosphothreonine; by autocatalysis. A phosphoserine; by autocatalysis mark is found at S1513, S1527, and S1533. The disordered stretch occupies residues 1524-1543; the sequence is DRPSNREMPSEEGTLNGLTS. 2 positions are modified to phosphothreonine; by autocatalysis: T1537 and T1542. S1543 is modified (phosphoserine; by autocatalysis). Position 1551 is a phosphothreonine; by autocatalysis (T1551). S1567 and S1569 each carry phosphoserine; by autocatalysis. T1583 is subject to Phosphothreonine; by autocatalysis. In terms of domain architecture, Alpha-type protein kinase spans 1594–1824; that stretch reads ILNNSMSSWS…CCRKLKLPDL (231 aa). A phosphoserine; by autocatalysis mark is found at S1598 and S1615. Residues G1621, G1622, L1623, R1624, and K1648 each contribute to the ADP site. S1660 bears the Phosphoserine; by autocatalysis mark. At T1685 the chain carries Phosphothreonine; by autocatalysis. Residues E1720, E1721, and M1723 each coordinate ADP. H1753 contacts Zn(2+). The Proton acceptor role is filled by D1767. D1777 serves as a coordination point for ADP. S1779 bears the Phosphoserine; by autocatalysis mark. Residues H1810, C1812, and C1816 each coordinate Zn(2+). T1830 is modified (phosphothreonine; by autocatalysis). The segment at 1836–1865 is disordered; that stretch reads FPQDEPSDLNLQPGNSTKESESTNSVRLML. Positions 1844 to 1865 are enriched in polar residues; sequence LNLQPGNSTKESESTNSVRLML. At S1851 the chain carries Phosphoserine. The residue at position 1860 (S1860) is a Phosphoserine; by autocatalysis.

It in the C-terminal section; belongs to the protein kinase superfamily. Alpha-type protein kinase family. ALPK subfamily. In the N-terminal section; belongs to the transient receptor (TC 1.A.4) family. LTrpC subfamily. TRPM7 sub-subfamily. As to quaternary structure, homotetramer. Interacts with PLCB1. Forms heteromers with TRPM6; heteromeric channels are functionally different from the homomeric channels. The cofactor is Zn(2+). Palmitoylated; palmitoylation at Cys-1143, Cys-1144 and Cys-1146 promotes TRPM7 trafficking from the Golgi to the surface membrane. In terms of processing, autophosphorylated; autophosphorylation of C-terminus regulates TRPM7 kinase activity towards its substrates. Post-translationally, the C-terminal kinase domain can be cleaved from the channel segment in a cell-type-specific fashion. TRPM7 is cleaved by caspase-8, dissociating the kinase from the ion-conducting pore. The cleaved kinase fragments (M7CKs) can translocate to the cell nucleus and binds chromatin-remodeling complex proteins in a Zn(2+)-dependent manner to ultimately phosphorylate specific Ser/Thr residues of histones.

It localises to the cell membrane. Its subcellular location is the cytoplasmic vesicle membrane. The protein resides in the nucleus. It catalyses the reaction L-seryl-[protein] + ATP = O-phospho-L-seryl-[protein] + ADP + H(+). The enzyme catalyses L-threonyl-[protein] + ATP = O-phospho-L-threonyl-[protein] + ADP + H(+). The catalysed reaction is Mg(2+)(in) = Mg(2+)(out). It carries out the reaction Ca(2+)(in) = Ca(2+)(out). It catalyses the reaction Zn(2+)(in) = Zn(2+)(out). Channel displays constitutive activity. Channel activity is negatively regulated by cytosolic Mg(2+) and Mg-ATP. Channel activity is negatively regulated by low intracellular pH. Resting free cytosolic Mg(2+) and Mg-ATP concentrations seem to be sufficient to block native TRPM7 channel activity. TRPM7 channel activity is highly dependent on membrane levels of phosphatidylinositol 4,5 bisphosphate (PIP2). PIP2 hydrolysis negatively regulates TRPM7 channel activity. TRPM7 kinase activity does not affect channel activity. The kinase activity is controlled through the autophosphorylation of a serine/threonine-rich region located N-terminal to the catalytic domain. Its function is as follows. Bifunctional protein that combines an ion channel with an intrinsic kinase domain, enabling it to modulate cellular functions either by conducting ions through the pore or by phosphorylating downstream proteins via its kinase domain. The channel is highly permeable to divalent cations, specifically calcium (Ca2+), magnesium (Mg2+) and zinc (Zn2+) and mediates their influx. Controls a wide range of biological processes such as Ca2(+), Mg(2+) and Zn(2+) homeostasis, vesicular Zn(2+) release channel and intracellular Ca(2+) signaling, embryonic development, immune responses, cell motility, proliferation and differentiation. The C-terminal alpha-kinase domain autophosphorylates cytoplasmic residues of TRPM7. In vivo, TRPM7 phosphorylates SMAD2, suggesting that TRPM7 kinase may play a role in activating SMAD signaling pathways. In vitro, TRPM7 kinase phosphorylates ANXA1 (annexin A1), myosin II isoforms and a variety of proteins with diverse cellular functions. The cleaved channel exhibits substantially higher current and potentiates Fas receptor signaling. Functionally, the C-terminal kinase domain can be cleaved from the channel segment in a cell-type-specific fashion. In immune cells, the TRPM7 kinase domain is clipped from the channel domain by caspases in response to Fas-receptor stimulation. The cleaved kinase fragments can translocate to the nucleus, and bind chromatin-remodeling complex proteins in a Zn(2+)-dependent manner to ultimately phosphorylate specific Ser/Thr residues of histones known to be functionally important for cell differentiation and embryonic development. The chain is Transient receptor potential cation channel subfamily M member 7 (TRPM7) from Homo sapiens (Human).